A 320-amino-acid chain; its full sequence is o-succinylbenzoate synthase (320 aa).

The active-site Proton donor is the Lys133. Positions 161, 190, and 213 each coordinate Mg(2+). Lys235 functions as the Proton acceptor in the catalytic mechanism.

Belongs to the mandelate racemase/muconate lactonizing enzyme family. MenC type 1 subfamily. A divalent metal cation is required as a cofactor.

It carries out the reaction (1R,6R)-6-hydroxy-2-succinyl-cyclohexa-2,4-diene-1-carboxylate = 2-succinylbenzoate + H2O. It functions in the pathway quinol/quinone metabolism; 1,4-dihydroxy-2-naphthoate biosynthesis; 1,4-dihydroxy-2-naphthoate from chorismate: step 4/7. The protein operates within quinol/quinone metabolism; menaquinone biosynthesis. Its function is as follows. Converts 2-succinyl-6-hydroxy-2,4-cyclohexadiene-1-carboxylate (SHCHC) to 2-succinylbenzoate (OSB). The protein is o-succinylbenzoate synthase of Salmonella paratyphi B (strain ATCC BAA-1250 / SPB7).